Consider the following 183-residue polypeptide: Glutathione-regulated potassium-efflux system ancillary protein KefG (183 aa).

The protein belongs to the NAD(P)H dehydrogenase (quinone) family. KefG subfamily. In terms of assembly, interacts with KefB.

It localises to the cell inner membrane. It carries out the reaction a quinone + NADH + H(+) = a quinol + NAD(+). It catalyses the reaction a quinone + NADPH + H(+) = a quinol + NADP(+). In terms of biological role, regulatory subunit of a potassium efflux system that confers protection against electrophiles. Required for full activity of KefB. The sequence is that of Glutathione-regulated potassium-efflux system ancillary protein KefG from Salmonella paratyphi C (strain RKS4594).